The following is a 175-amino-acid chain: Large ribosomal subunit protein bL17 (175 aa).

The tract at residues 127-175 (GEAEAATKRAVKEDALKKDEAPAAESVEDAKPAEDAPAAEAADDKGKDA) is disordered. Residues 131–147 (AATKRAVKEDALKKDEA) show a composition bias toward basic and acidic residues.

This sequence belongs to the bacterial ribosomal protein bL17 family. As to quaternary structure, part of the 50S ribosomal subunit. Contacts protein L32.

The protein is Large ribosomal subunit protein bL17 of Streptomyces griseus subsp. griseus (strain JCM 4626 / CBS 651.72 / NBRC 13350 / KCC S-0626 / ISP 5235).